The following is a 441-amino-acid chain: Inositol hexakisphosphate kinase 1 (441 aa).

The interval 100-175 is disordered; sequence ETVEQDDTTE…MLDGNSGLSS (76 aa). Basic residues predominate over residues 113–123; the sequence is PRRKHSRRSLH. The segment covering 137–149 has biased composition (low complexity); the sequence is SLSLETSESSQEA. Basic and acidic residues predominate over residues 150–160; that stretch reads KSPKVELHSHS. Serine 151 is modified (phosphoserine). 220–228 serves as a coordination point for substrate; it reads PCVLDLKMG. The tract at residues 370–392 is disordered; it reads SSCGPSTSPSNTSPEAGPSSQPK. Over residues 372 to 391 the composition is skewed to polar residues; the sequence is CGPSTSPSNTSPEAGPSSQP.

Belongs to the inositol phosphokinase (IPK) family.

The protein resides in the cytoplasm. Its subcellular location is the nucleus. The enzyme catalyses 1D-myo-inositol hexakisphosphate + ATP = 5-diphospho-1D-myo-inositol 1,2,3,4,6-pentakisphosphate + ADP. The catalysed reaction is 1-diphospho-1D-myo-inositol 2,3,4,5,6-pentakisphosphate + ATP + H(+) = 1,5-bis(diphospho)-1D-myo-inositol 2,3,4,6-tetrakisphosphate + ADP. Its function is as follows. Converts inositol hexakisphosphate (InsP6) to diphosphoinositol pentakisphosphate (InsP7/PP-InsP5). Converts 1,3,4,5,6-pentakisphosphate (InsP5) to PP-InsP4. In Homo sapiens (Human), this protein is Inositol hexakisphosphate kinase 1 (IP6K1).